A 78-amino-acid chain; its full sequence is Large ribosomal subunit protein bL28 (78 aa).

It belongs to the bacterial ribosomal protein bL28 family.

In Prochlorococcus marinus (strain AS9601), this protein is Large ribosomal subunit protein bL28.